Here is a 114-residue protein sequence, read N- to C-terminus: Lymphotactin (114 aa).

The first 21 residues, 1 to 21 (MRLLILALLGICSLTAYIVEG), serve as a signal peptide directing secretion. Cys-32 and Cys-69 are joined by a disulfide. The segment at 91-114 (RNNMIQTKPTGTQQSTNTAVTLTG) is disordered.

The protein belongs to the intercrine gamma family. Highest level in spleen, lower in peripheral leukocytes and very low levels in lung, colon and small intestine.

The protein resides in the secreted. In terms of biological role, chemotactic activity for lymphocytes but not for monocytes or neutrophils. In thymus, mediates medullary accumulation of thymic dendritic cells and contributes to regulatoy T cell development, playing a role in self-tolerance establishment. The protein is Lymphotactin (XCL1) of Homo sapiens (Human).